The chain runs to 315 residues: MPDMKLFAGNATPELAQRIANRLYTSLGDAAVGRFSDGEVSVQINENVRGGDIFIIQSTCAPTNDNLMELVVMVDALRRASAGRITAVIPYFGYARQDRRVRSARVPITAKVVADFLSSVGVDRVLTVDLHAEQIQGFFDVPVDNVFGSPILLEDMLQLNLDNPIVVSPDIGGVVRARAIAKLLNDTDMAIIDKRRPRANVSQVMHIIGDVAGRDCVLVDDMIDTGGTLCKAAEALKERGAKRVFAYATHPIFSGNAANNLRNSVIDEVVVCDTIPLSDEIKSLPNVRTLTLSGMLAEAIRRISNEESISAMFEH.

ATP is bound by residues 37–39 (DGE) and 96–97 (RQ). The Mg(2+) site is built by His-131 and Asp-170. Lys-194 is an active-site residue. D-ribose 5-phosphate contacts are provided by residues Arg-196, Asp-220, and 224-228 (DTGGT).

This sequence belongs to the ribose-phosphate pyrophosphokinase family. Class I subfamily. In terms of assembly, homohexamer. It depends on Mg(2+) as a cofactor.

The protein localises to the cytoplasm. The catalysed reaction is D-ribose 5-phosphate + ATP = 5-phospho-alpha-D-ribose 1-diphosphate + AMP + H(+). It functions in the pathway metabolic intermediate biosynthesis; 5-phospho-alpha-D-ribose 1-diphosphate biosynthesis; 5-phospho-alpha-D-ribose 1-diphosphate from D-ribose 5-phosphate (route I): step 1/1. Involved in the biosynthesis of the central metabolite phospho-alpha-D-ribosyl-1-pyrophosphate (PRPP) via the transfer of pyrophosphoryl group from ATP to 1-hydroxyl of ribose-5-phosphate (Rib-5-P). In Escherichia coli O6:H1 (strain CFT073 / ATCC 700928 / UPEC), this protein is Ribose-phosphate pyrophosphokinase.